A 33-amino-acid polypeptide reads, in one-letter code: uncharacterized protein (33 aa).

Topologically, residues Met1 to Lys12 are cytoplasmic. Residues Leu13–Tyr33 traverse the membrane as a helical segment.

Its subcellular location is the cell inner membrane. This is an uncharacterized protein from Escherichia coli (strain K12).